The primary structure comprises 196 residues: APGW-amide-related neuropeptide (196 aa).

Positions 1-22 are cleaved as a signal peptide; it reads METLNIFLVIFSLLGTIIIASS. Positions 23–48 are excised as a propeptide; the sequence is SDESSERKKRDLDTIDDTNNDFLTAD. Position 54 is a tryptophan amide (W54). A propeptide spanning residues 58-68 is cleaved from the precursor; that stretch reads SFDDDILNNLD. W74 is modified (tryptophan amide). Residues 78-88 constitute a propeptide that is removed on maturation; that stretch reads SDMLFDSEEIE. W94 carries the post-translational modification Tryptophan amide. The propeptide occupies 98–105; that stretch reads SSSLYDDE. The residue at position 111 (W111) is a Tryptophan amide. Positions 115–129 are excised as a propeptide; that stretch reads SSALLDDLSLYNSIV. Residue W135 is modified to Tryptophan amide. Residues 139-146 constitute a propeptide that is removed on maturation; the sequence is SDTFKVDI. A tryptophan amide mark is found at W151 and W158. The propeptide occupies 162–196; that stretch reads SGPNMCMDFQDEILQLYKLLNEAEKLHSECEALNI.

In terms of tissue distribution, expressed in cerebral, pedal and visceral ganglia. TPGW-amide is found in pedal and cerebral ganglia and in shell adductor muscle (at protein level). RPGW-amide and KPGW-amide are found in pedal retractor muscle, ABRM and shell adductor muscle (at protein level).

Functionally, RPGW-amide, KPGW-amide and TPGW-amide tetrapeptides are involved in control of muscle contraction and may function as neurotransmitters. These peptides increase tension of the pedal retractor muscle and, in conjunction with FMRF-amide, increase peak tension of the anterior byssus retractor muscle (ABRM). In Mytilus edulis (Blue mussel), this protein is APGW-amide-related neuropeptide.